The following is a 261-amino-acid chain: Cytochrome c oxidase subunit 3 (261 aa).

The Mitochondrial matrix portion of the chain corresponds to 1 to 15 (MTHQTHAYHMVDPSP). A helical membrane pass occupies residues 16-34 (WPLTGALSALLMTSGLTMW). Topologically, residues 35–40 (FHYHSV) are mitochondrial intermembrane. The chain crosses the membrane as a helical span at residues 41 to 66 (TLLLLGLTTNILTMFQWWRDVVREGT). Residues 67-72 (FQGHHT) lie on the Mitochondrial matrix side of the membrane. The helical transmembrane segment at 73-105 (PVVQESLRYGMILFITSEVLFFTGFFWAFYHSS) threads the bilayer. At 106–128 (LAPTPELGSYWPPVGVYPLNPLE) the chain is on the mitochondrial intermembrane side. The helical transmembrane segment at 129 to 152 (VPLLNTSVLLASGVTITWAHHSLM) threads the bilayer. Topologically, residues 153-155 (EGN) are mitochondrial matrix. The chain crosses the membrane as a helical span at residues 156 to 183 (RKNMLQALLITILLGVYFTLLQMFEYYE). Over 184-190 (ASFTISD) the chain is Mitochondrial intermembrane. A helical transmembrane segment spans residues 191-223 (GIYGSTFFVTTGFHGLHVIIGSTFLLTCFIRQL). Residues 224–232 (KFHFTSNHH) are Mitochondrial matrix-facing. Residues 233 to 256 (FGFEAAAWYWHFVDVVWLFLYLSI) traverse the membrane as a helical segment. Residues 257-261 (YWWGS) lie on the Mitochondrial intermembrane side of the membrane.

Belongs to the cytochrome c oxidase subunit 3 family. As to quaternary structure, component of the cytochrome c oxidase (complex IV, CIV), a multisubunit enzyme composed of 14 subunits. The complex is composed of a catalytic core of 3 subunits MT-CO1, MT-CO2 and MT-CO3, encoded in the mitochondrial DNA, and 11 supernumerary subunits COX4I, COX5A, COX5B, COX6A, COX6B, COX6C, COX7A, COX7B, COX7C, COX8 and NDUFA4, which are encoded in the nuclear genome. The complex exists as a monomer or a dimer and forms supercomplexes (SCs) in the inner mitochondrial membrane with NADH-ubiquinone oxidoreductase (complex I, CI) and ubiquinol-cytochrome c oxidoreductase (cytochrome b-c1 complex, complex III, CIII), resulting in different assemblies (supercomplex SCI(1)III(2)IV(1) and megacomplex MCI(2)III(2)IV(2)).

The protein localises to the mitochondrion inner membrane. The enzyme catalyses 4 Fe(II)-[cytochrome c] + O2 + 8 H(+)(in) = 4 Fe(III)-[cytochrome c] + 2 H2O + 4 H(+)(out). Its function is as follows. Component of the cytochrome c oxidase, the last enzyme in the mitochondrial electron transport chain which drives oxidative phosphorylation. The respiratory chain contains 3 multisubunit complexes succinate dehydrogenase (complex II, CII), ubiquinol-cytochrome c oxidoreductase (cytochrome b-c1 complex, complex III, CIII) and cytochrome c oxidase (complex IV, CIV), that cooperate to transfer electrons derived from NADH and succinate to molecular oxygen, creating an electrochemical gradient over the inner membrane that drives transmembrane transport and the ATP synthase. Cytochrome c oxidase is the component of the respiratory chain that catalyzes the reduction of oxygen to water. Electrons originating from reduced cytochrome c in the intermembrane space (IMS) are transferred via the dinuclear copper A center (CU(A)) of subunit 2 and heme A of subunit 1 to the active site in subunit 1, a binuclear center (BNC) formed by heme A3 and copper B (CU(B)). The BNC reduces molecular oxygen to 2 water molecules using 4 electrons from cytochrome c in the IMS and 4 protons from the mitochondrial matrix. The protein is Cytochrome c oxidase subunit 3 (MT-CO3) of Loxodonta africana (African elephant).